The sequence spans 197 residues: Rac-like GTP-binding protein RHO1 (197 aa).

13 to 20 (GDGAVGKT) contacts GTP. The short motif at 35–43 (YVPTVFDNF) is the Effector region element. Residues 60–64 (DTAGQ) and 118–121 (TKLD) each bind GTP. A Cysteine methyl ester modification is found at Cys-194. Cys-194 is lipidated: S-geranylgeranyl cysteine. The propeptide at 195–197 (SIL) is removed in mature form.

This sequence belongs to the small GTPase superfamily. Rho family.

Its subcellular location is the cytoplasm. The protein localises to the membrane. Inactive GDP-bound Rho GTPases reside in the cytosol, are found in a complex with Rho GDP-dissociation inhibitors (Rho GDIs), and are released from the GDI protein in order to translocate to membranes upon activation. In Beta vulgaris (Sugar beet), this protein is Rac-like GTP-binding protein RHO1 (RHO1).